The chain runs to 515 residues: AAA ATPase forming ring-shaped complexes (515 aa).

Residues Asn-2–Gly-49 are a coiled coil. Gly-240–Leu-245 lines the ATP pocket.

This sequence belongs to the AAA ATPase family. In terms of assembly, homohexamer. Assembles into a hexameric ring structure.

The sequence is that of AAA ATPase forming ring-shaped complexes from Bifidobacterium adolescentis (strain ATCC 15703 / DSM 20083 / NCTC 11814 / E194a).